The following is a 601-amino-acid chain: Glutamine--fructose-6-phosphate aminotransferase [isomerizing] (601 aa).

The active-site Nucleophile; for GATase activity is C2. In terms of domain architecture, Glutamine amidotransferase type-2 spans 2-218 (CGIVGYIGYD…DHEIVIVKRD (217 aa)). SIS domains lie at 284 to 423 (IIND…NHGR) and 453 to 591 (IATD…VDKP). The active-site For Fru-6P isomerization activity is the K596.

Homodimer.

It is found in the cytoplasm. It carries out the reaction D-fructose 6-phosphate + L-glutamine = D-glucosamine 6-phosphate + L-glutamate. In terms of biological role, catalyzes the first step in hexosamine metabolism, converting fructose-6P into glucosamine-6P using glutamine as a nitrogen source. The sequence is that of Glutamine--fructose-6-phosphate aminotransferase [isomerizing] from Staphylococcus epidermidis (strain ATCC 35984 / DSM 28319 / BCRC 17069 / CCUG 31568 / BM 3577 / RP62A).